The sequence spans 392 residues: Proteasome-activating nucleotidase (392 aa).

A coiled-coil region spans residues 19-53 (IVRLLEEKIESLTKELEKLRQDLNWYKGELEKLLA). ATP is bound by residues 178–183 (GTGKTL) and Tyr-317. Positions 390–392 (KYV) are docks into pockets in the proteasome alpha-ring to cause gate opening.

This sequence belongs to the AAA ATPase family. Homohexamer. The hexameric complex has a two-ring architecture resembling a top hat that caps the 20S proteasome core at one or both ends. Upon ATP-binding, the C-terminus of PAN interacts with the alpha-rings of the proteasome core by binding to the intersubunit pockets.

The protein resides in the cytoplasm. Its function is as follows. ATPase which is responsible for recognizing, binding, unfolding and translocation of substrate proteins into the archaeal 20S proteasome core particle. Is essential for opening the gate of the 20S proteasome via an interaction with its C-terminus, thereby allowing substrate entry and access to the site of proteolysis. Thus, the C-termini of the proteasomal ATPase function like a 'key in a lock' to induce gate opening and therefore regulate proteolysis. Unfolding activity requires energy from ATP hydrolysis, whereas ATP binding alone promotes ATPase-20S proteasome association which triggers gate opening, and supports translocation of unfolded substrates. This is Proteasome-activating nucleotidase from Sulfurisphaera tokodaii (strain DSM 16993 / JCM 10545 / NBRC 100140 / 7) (Sulfolobus tokodaii).